The following is a 2345-amino-acid chain: Nonribisomal peptide synthetase malG (2345 aa).

The adenylation 1 stretch occupies residues 226-620 (FSEQAKKNPT…VGRMGTVVKV (395 aa)). In terms of domain architecture, Carrier 1 spans 766-839 (TENETLLRLL…EAAGTMISAG (74 aa)). S800 bears the O-(pantetheine 4'-phosphoryl)serine mark. Residues 877–1292 (EEIYPSTPLQ…LLCPSDKSKL (416 aa)) are condensation 1. An adenylation 2 region spans residues 1317-1707 (VRSERTAVSA…GRKNREVKLR (391 aa)). The region spanning 1843-1926 (QPHESTALFV…DIARLIEGVK (84 aa)) is the Carrier 2 domain. S1885 carries the O-(pantetheine 4'-phosphoryl)serine modification. The reductase (R) domain stretch occupies residues 1969–2256 (GMSVFLTGGT…PRQLNALQSE (288 aa)).

The protein belongs to the NRP synthetase family.

It carries out the reaction L-proline + L-tryptophan + 2 ATP + NADPH = (S)-3-(indol-3-ylmethyl)-6,7,8,8a-tetrahydropyrrolo[1,2-a]pyrazin-1-one + 2 AMP + 2 diphosphate + NADP(+) + H2O + H(+). In terms of biological role, nonribisomal peptide synthetase; part of the gene cluster that mediates the biosynthesis of malbrancheamide, a dichlorinated fungal indole alkaloid that belongs to a family of natural products containing a characteristic bicyclo[2.2.2]diazaoctane core. The first step of malbrancheamide biosynthesis involves coupling of L-proline and L-tryptophan by malG, a bimodular NRPS, to produce L-Pro-L-Trp aldehyde through reductive offloading. This compound undergoes spontaneous cyclization and dehydration to give a dienamine which is reverse prenylated at C-2 by malE. The other prenyltransferase present in the cluster, malB, displays modest activity, suggesting that may be a redundant gene in the pathway. Subsequently, a [4+2] Diels-Alder cyclo-addition catalyzed by the bifunctional enzyme malC forms the characteristic bicyclo[2.2.2]diazaoctane ring of premalbrancheamid. Finally, the flavin-dependent halogenase malA catalyzes the iterative dichlorination of the indole ring of premalbrancheamide to yield C-9 monochlorinated malbrancheamide B, C-8 monochlorinated isomalbrancheamide B, and dichlorinated malbrancheamide. MalA is also able to brominate premalbrancheamide at C-9 to yield malbrancheamide C, and, to a lesser extend, at C-8 to yield isomalbrancheamide C. Finally, malA can brominate C-9 monochlorinated malbrancheamide B at C-8 to yield malbrancheamide D, or C-8 monochlorinated isomalbrancheamide B at C-9 to produce isomalbrancheamide D. This chain is Nonribisomal peptide synthetase malG, found in Malbranchea aurantiaca.